A 183-amino-acid polypeptide reads, in one-letter code: Cyanate hydratase (183 aa).

Residues Arg-118, Glu-121, and Ser-144 contribute to the active site.

It belongs to the cyanase family.

It catalyses the reaction cyanate + hydrogencarbonate + 3 H(+) = NH4(+) + 2 CO2. Its function is as follows. Catalyzes the reaction of cyanate with bicarbonate to produce ammonia and carbon dioxide. This is Cyanate hydratase from Cryptococcus neoformans var. neoformans serotype D (strain B-3501A) (Filobasidiella neoformans).